The following is a 253-amino-acid chain: Triosephosphate isomerase (253 aa).

A substrate-binding site is contributed by 13–15 (NWK). The Electrophile role is filled by histidine 100. Glutamate 169 (proton acceptor) is an active-site residue. Substrate-binding positions include glycine 175, serine 208, and 229 to 230 (GG).

Belongs to the triosephosphate isomerase family. As to quaternary structure, homodimer.

The protein localises to the cytoplasm. The catalysed reaction is D-glyceraldehyde 3-phosphate = dihydroxyacetone phosphate. The protein operates within carbohydrate biosynthesis; gluconeogenesis. It participates in carbohydrate degradation; glycolysis; D-glyceraldehyde 3-phosphate from glycerone phosphate: step 1/1. Involved in the gluconeogenesis. Catalyzes stereospecifically the conversion of dihydroxyacetone phosphate (DHAP) to D-glyceraldehyde-3-phosphate (G3P). The sequence is that of Triosephosphate isomerase from Synechococcus sp. (strain RCC307).